A 101-amino-acid polypeptide reads, in one-letter code: Small ribosomal subunit protein uS14 (101 aa).

This sequence belongs to the universal ribosomal protein uS14 family. As to quaternary structure, part of the 30S ribosomal subunit. Contacts proteins S3 and S10.

Functionally, binds 16S rRNA, required for the assembly of 30S particles and may also be responsible for determining the conformation of the 16S rRNA at the A site. The protein is Small ribosomal subunit protein uS14 of Actinobacillus succinogenes (strain ATCC 55618 / DSM 22257 / CCUG 43843 / 130Z).